A 92-amino-acid polypeptide reads, in one-letter code: Protein S100-B (92 aa).

S2 bears the N-acetylserine mark. EF-hand domains are found at residues 13–48 (DVFH…LEEI) and 49–84 (KEQE…VTTA). Residue H16 participates in Zn(2+) binding. Positions 19 and 22 each coordinate Ca(2+). Position 26 (H26) interacts with Zn(2+). Residues K27, E32, D62, D64, D66, E68, and E73 each contribute to the Ca(2+) site. Zn(2+)-binding residues include H86 and H91.

It belongs to the S-100 family. Dimer of either two alpha chains, or two beta chains, or one alpha and one beta chain. The S100B dimer binds two molecules of STK38. Interacts with CACYBP in a calcium-dependent manner. Interacts with ATAD3A; this interaction probably occurs in the cytosol prior to ATAD3A mitochondrial targeting. Interacts with S100A6. The S100B dimer interacts with two molecules of CAPZA1. Interacts with AGER. Interacts with PPP5C (via TPR repeats); the interaction is calcium-dependent and modulates PPP5C activity. Interacts with TPPP; this interaction inhibits TPPP dimerization. Interacts with isoform CLSTN3beta of CLSTN3; interaction promotes secretion. In terms of tissue distribution, although predominant among the water-soluble brain proteins, S100 is also found in a variety of other tissues.

The protein localises to the cytoplasm. Its subcellular location is the nucleus. It is found in the secreted. Functionally, small zinc- and- and calcium-binding protein that is highly expressed in astrocytes and constitutes one of the most abundant soluble proteins in brain. Weakly binds calcium but binds zinc very tightly-distinct binding sites with different affinities exist for both ions on each monomer. Physiological concentrations of potassium ion antagonize the binding of both divalent cations, especially affecting high-affinity calcium-binding sites. Acts as a neurotrophic factor that promotes astrocytosis and axonal proliferation. Involved in innervation of thermogenic adipose tissue by acting as an adipocyte-derived neurotrophic factor that promotes sympathetic innervation of adipose tissue. Binds to and initiates the activation of STK38 by releasing autoinhibitory intramolecular interactions within the kinase. Interaction with AGER after myocardial infarction may play a role in myocyte apoptosis by activating ERK1/2 and p53/TP53 signaling. Could assist ATAD3A cytoplasmic processing, preventing aggregation and favoring mitochondrial localization. May mediate calcium-dependent regulation on many physiological processes by interacting with other proteins, such as TPR-containing proteins, and modulating their activity. The polypeptide is Protein S100-B (Rattus norvegicus (Rat)).